Reading from the N-terminus, the 845-residue chain is Translation initiation factor IF-2 (845 aa).

Residues 1-260 form a disordered region; that stretch reads MSDEQDKPTL…HMTSSGPREK (260 aa). The segment covering 68 to 81 has biased composition (pro residues); sequence APAPAPAAPRPAAP. Positions 101–140 are enriched in basic and acidic residues; sequence REAEEARMAALEENRRREEAERARAAEEERARAEKREEQA. Composition is skewed to low complexity over residues 141 to 166 and 173 to 191; these read ATKA…APPA and TAAR…RFTP. The segment covering 194–215 has biased composition (basic and acidic residues); that stretch reads ALKRPEPKRPEPKASRGGENRR. In terms of domain architecture, tr-type G spans 344–514; the sequence is PRAPVVTIMG…ALQAEIMELK (171 aa). Residues 353–360 form a G1 region; it reads GHVDHGKT. 353 to 360 lines the GTP pocket; sequence GHVDHGKT. A G2 region spans residues 378-382; that stretch reads GITQH. Residues 400 to 403 form a G3 region; that stretch reads DTPG. GTP-binding positions include 400-404 and 454-457; these read DTPGH and NKVD. Residues 454 to 457 are G4; that stretch reads NKVD. The G5 stretch occupies residues 490 to 492; the sequence is SAL.

It belongs to the TRAFAC class translation factor GTPase superfamily. Classic translation factor GTPase family. IF-2 subfamily.

The protein localises to the cytoplasm. One of the essential components for the initiation of protein synthesis. Protects formylmethionyl-tRNA from spontaneous hydrolysis and promotes its binding to the 30S ribosomal subunits. Also involved in the hydrolysis of GTP during the formation of the 70S ribosomal complex. In Sphingopyxis alaskensis (strain DSM 13593 / LMG 18877 / RB2256) (Sphingomonas alaskensis), this protein is Translation initiation factor IF-2.